A 165-amino-acid polypeptide reads, in one-letter code: ATP synthase subunit delta, mitochondrial (165 aa).

Residues 1-27 (MNSLRIARAALRVRPTAVRAPLQRRGY) constitute a mitochondrion transit peptide.

It belongs to the ATPase epsilon chain family. As to quaternary structure, F-type ATPases have 2 components, CF(1) - the catalytic core - and CF(0) - the membrane proton channel. CF(1) has five subunits: alpha(3), beta(3), gamma(1), delta(1), epsilon(1). CF(0) has three main subunits: a, b and c.

Its subcellular location is the mitochondrion. The protein localises to the mitochondrion inner membrane. In terms of biological role, mitochondrial membrane ATP synthase (F(1)F(0) ATP synthase or Complex V) produces ATP from ADP in the presence of a proton gradient across the membrane which is generated by electron transport complexes of the respiratory chain. F-type ATPases consist of two structural domains, F(1) - containing the extramembraneous catalytic core, and F(0) - containing the membrane proton channel, linked together by a central stalk and a peripheral stalk. During catalysis, ATP turnover in the catalytic domain of F(1) is coupled via a rotary mechanism of the central stalk subunits to proton translocation. Part of the complex F(1) domain and of the central stalk which is part of the complex rotary element. Rotation of the central stalk against the surrounding alpha(3)beta(3) subunits leads to hydrolysis of ATP in three separate catalytic sites on the beta subunits. The sequence is that of ATP synthase subunit delta, mitochondrial (des) from Neurospora crassa (strain ATCC 24698 / 74-OR23-1A / CBS 708.71 / DSM 1257 / FGSC 987).